Here is a 174-residue protein sequence, read N- to C-terminus: uncharacterized protein (174 aa).

The protein belongs to the IIV-6 196R family.

This is an uncharacterized protein from Acheta domesticus (House cricket).